The sequence spans 257 residues: MRPCRSLRTAALAVVLTVLLHPVALGRATPGESEQNYLWQRRYECYASNGTQRLLDRCAYNREEFVRFDSDIGEFRAVSELGRQVAESWNLEYLQQARAEVDRVCRHNYELFQGLPVLLQTQPRVSVSPSKKGPLQHHSLLVCHVTDFYPGHVQVRWFLNGREETAGVVSTHPIHNGDWTFQILVMLEMTPHQGDVYTCHVEHPSLDSPITVEWKAQSDSARSKMLAGVGGLVLGLVSLAVGVFMHRRSKKAQQGCR.

An N-terminal signal peptide occupies residues 1 to 29 (MRPCRSLRTAALAVVLTVLLHPVALGRAT). Positions 30–120 (PGESEQNYLW…LFQGLPVLLQ (91 aa)) are beta-1. At 30-224 (PGESEQNYLW…KAQSDSARSK (195 aa)) the chain is on the extracellular side. Disulfide bonds link cysteine 45-cysteine 105 and cysteine 143-cysteine 199. Asparagine 49 carries an N-linked (GlcNAc...) asparagine glycan. The interval 121–214 (TQPRVSVSPS…SLDSPITVEW (94 aa)) is beta-2. Residues 123–211 (PRVSVSPSKK…EHPSLDSPIT (89 aa)) form the Ig-like C1-type domain. The segment at 215–224 (KAQSDSARSK) is connecting peptide. A helical transmembrane segment spans residues 225–245 (MLAGVGGLVLGLVSLAVGVFM). Over 246–257 (HRRSKKAQQGCR) the chain is Cytoplasmic.

It belongs to the MHC class II family.

It localises to the membrane. This chain is RLA class II histocompatibility antigen, DP beta chain, found in Oryctolagus cuniculus (Rabbit).